We begin with the raw amino-acid sequence, 303 residues long: N-acetyl-D-glucosamine kinase (303 aa).

ATP contacts are provided by residues 4 to 11 and 133 to 140; these read GFDIGGTK and GVGGGLIF. Positions 157, 177, 179, and 184 each coordinate Zn(2+).

It belongs to the ROK (NagC/XylR) family. NagK subfamily.

It catalyses the reaction N-acetyl-D-glucosamine + ATP = N-acetyl-D-glucosamine 6-phosphate + ADP + H(+). It participates in cell wall biogenesis; peptidoglycan recycling. Functionally, catalyzes the phosphorylation of N-acetyl-D-glucosamine (GlcNAc) derived from cell-wall degradation, yielding GlcNAc-6-P. This is N-acetyl-D-glucosamine kinase from Escherichia coli O157:H7.